Reading from the N-terminus, the 212-residue chain is Peptidyl-prolyl cis-trans isomerase-like 3 (212 aa).

The PPIase cyclophilin-type domain maps to 1 to 198; the sequence is MSVTLHTTHG…EGEEGGYEAI (198 aa).

This sequence belongs to the cyclophilin-type PPIase family. PPIL3 subfamily.

It carries out the reaction [protein]-peptidylproline (omega=180) = [protein]-peptidylproline (omega=0). In terms of biological role, PPIases accelerate the folding of proteins. It catalyzes the cis-trans isomerization of proline imidic peptide bonds in oligopeptides. This is Peptidyl-prolyl cis-trans isomerase-like 3 (cyp10) from Aspergillus fumigatus (strain ATCC MYA-4609 / CBS 101355 / FGSC A1100 / Af293) (Neosartorya fumigata).